We begin with the raw amino-acid sequence, 302 residues long: tRNA pseudouridine synthase B (302 aa).

Residue Asp-47 is the Nucleophile of the active site.

Belongs to the pseudouridine synthase TruB family. Type 1 subfamily.

It carries out the reaction uridine(55) in tRNA = pseudouridine(55) in tRNA. Functionally, responsible for synthesis of pseudouridine from uracil-55 in the psi GC loop of transfer RNAs. In Ruegeria sp. (strain TM1040) (Silicibacter sp.), this protein is tRNA pseudouridine synthase B.